Consider the following 84-residue polypeptide: Large ribosomal subunit protein bL27 (84 aa).

The tract at residues 1–22 (MAHKKAGGSTRNGRDSESKRLG) is disordered.

This sequence belongs to the bacterial ribosomal protein bL27 family.

The sequence is that of Large ribosomal subunit protein bL27 from Shewanella pealeana (strain ATCC 700345 / ANG-SQ1).